Consider the following 1174-residue polypeptide: Ribonucleoside-diphosphate reductase large subunit-like protein (1174 aa).

The short motif at 50–72 (PYVRIMNGVSGIQIGNHNAMSIA) is the RIP homotypic interaction motif (RHIM) element. Disordered stretches follow at residues 170 to 269 (ASNA…KLKP) and 291 to 325 (AAAA…DQSS). 3 stretches are compositionally biased toward low complexity: residues 182–202 (ATSG…AATA), 233–243 (HVSVGTQATPS), and 291–316 (AAAA…AMAT).

It belongs to the ribonucleoside diphosphate reductase large chain family. In terms of assembly, self-assembles into homo-oligomeric amyloid fibrils. Interacts with host RIPK1 (via RIP homotypic interaction motif); this interaction inhibits RIPK1 ubiquitination thereby preventing effective activation of host NF-kappa-B. Interacts with host RIPK3 (via RIP homotypic interaction motif); this interaction disrupts RIPK3-RIPK1 interactions characteristic of TNF-alpha induced necroptosis, thereby suppressing this death pathway. Interacts (via RIP homotypic interaction motif) with host ZBP1 (via RIP homotypic interaction motif); this interaction inhibits recruitment of RIPK1 and RIPK3 to ZBP1 and prevents ZBP1-induced NF-kappa-B activation. Post-translationally, undergoes proteolytic cleavage, generating two peptides, a N-terminal and a 116 kDa. The N-terminal peptide retains RIPK1- and RIPK3-binding activity as well as cell death suppression activity.

It is found in the virion. The protein resides in the host cytoplasm. In terms of biological role, provides optimal viral replication conditions by promoting host cell survival and avoiding the host inflammatory response linked to NF-kappa-B activation. Blocks RIPK1 ubiquitination, thereby preventing NF-kappa-B activation and virally induced inflammatory response. Prevents host necroptosis by targeting RIPK3 thereby preventing the formation of necroptotic RIPK1-RIPK3 complexes. Also inhibits ZBP1-induced necroptosis. Does not have ribonucleotide reductase activity. Betaherpesviruses probably use another strategy to expand the dNTP pool in a quiescent host cell. This is Ribonucleoside-diphosphate reductase large subunit-like protein from Murid herpesvirus 1 (strain Smith) (MuHV-1).